The following is a 212-amino-acid chain: Probable GTP-binding protein EngB (212 aa).

In terms of domain architecture, EngB-type G spans 27 to 211 (GPPEIAFAGR…QAAIVLAANG (185 aa)). GTP contacts are provided by residues 35–42 (GRSNVGKS), 62–66 (GRTQE), 89–92 (DMPG), 156–159 (TKTD), and 190–192 (TSS). The Mg(2+) site is built by Ser-42 and Thr-64.

This sequence belongs to the TRAFAC class TrmE-Era-EngA-EngB-Septin-like GTPase superfamily. EngB GTPase family. Requires Mg(2+) as cofactor.

Necessary for normal cell division and for the maintenance of normal septation. This Mesorhizobium japonicum (strain LMG 29417 / CECT 9101 / MAFF 303099) (Mesorhizobium loti (strain MAFF 303099)) protein is Probable GTP-binding protein EngB.